The primary structure comprises 179 residues: Large ribosomal subunit protein uL6 (179 aa).

The protein belongs to the universal ribosomal protein uL6 family. In terms of assembly, part of the 50S ribosomal subunit.

Functionally, this protein binds to the 23S rRNA, and is important in its secondary structure. It is located near the subunit interface in the base of the L7/L12 stalk, and near the tRNA binding site of the peptidyltransferase center. The protein is Large ribosomal subunit protein uL6 of Chlorobium phaeobacteroides (strain BS1).